Here is a 71-residue protein sequence, read N- to C-terminus: uncharacterized protein (71 aa).

The N-terminal stretch at Met1–Leu23 is a signal peptide. Residues Asn20, Asn28, Asn44, and Asn50 are each glycosylated (N-linked (GlcNAc...) asparagine).

It localises to the secreted. This is an uncharacterized protein from Dictyostelium discoideum (Social amoeba).